The sequence spans 101 residues: NAD(P)H-quinone oxidoreductase subunit 4L, chloroplastic (101 aa).

3 helical membrane passes run 2 to 22 (MLEHVLFLSAYLFSIGIFGLI), 32 to 52 (MCLELILNAVNLNLVTFSHLF), and 61 to 81 (IFSIFVITIAAAEAAIGLAIV).

It belongs to the complex I subunit 4L family. In terms of assembly, NDH is composed of at least 16 different subunits, 5 of which are encoded in the nucleus.

Its subcellular location is the plastid. It is found in the chloroplast thylakoid membrane. The enzyme catalyses a plastoquinone + NADH + (n+1) H(+)(in) = a plastoquinol + NAD(+) + n H(+)(out). The catalysed reaction is a plastoquinone + NADPH + (n+1) H(+)(in) = a plastoquinol + NADP(+) + n H(+)(out). Its function is as follows. NDH shuttles electrons from NAD(P)H:plastoquinone, via FMN and iron-sulfur (Fe-S) centers, to quinones in the photosynthetic chain and possibly in a chloroplast respiratory chain. The immediate electron acceptor for the enzyme in this species is believed to be plastoquinone. Couples the redox reaction to proton translocation, and thus conserves the redox energy in a proton gradient. The protein is NAD(P)H-quinone oxidoreductase subunit 4L, chloroplastic of Piper cenocladum (Ant piper).